The following is a 311-amino-acid chain: Pyrimidine-specific ribonucleoside hydrolase RihA (311 aa).

His240 is a catalytic residue.

It belongs to the IUNH family. RihA subfamily.

Hydrolyzes cytidine or uridine to ribose and cytosine or uracil, respectively. This is Pyrimidine-specific ribonucleoside hydrolase RihA from Shigella flexneri serotype 5b (strain 8401).